The chain runs to 143 residues: Fido domain-containing protein DDB_G0283145 (143 aa).

Positions 1 to 128 constitute a Fido domain; that stretch reads MKGIIVSDGV…TSHLALIILN (128 aa). Residues 49–69 form a helical membrane-spanning segment; the sequence is SSPYAVAAWLLHAFVSIHPFI.

The protein resides in the membrane. This chain is Fido domain-containing protein DDB_G0283145, found in Dictyostelium discoideum (Social amoeba).